Reading from the N-terminus, the 637-residue chain is Biosynthetic arginine decarboxylase (637 aa).

Residue K101 is modified to N6-(pyridoxal phosphate)lysine. 286–296 (FDVGGGLAVDY) provides a ligand contact to substrate.

This sequence belongs to the Orn/Lys/Arg decarboxylase class-II family. SpeA subfamily. It depends on Mg(2+) as a cofactor. Pyridoxal 5'-phosphate serves as cofactor.

The enzyme catalyses L-arginine + H(+) = agmatine + CO2. The protein operates within amine and polyamine biosynthesis; agmatine biosynthesis; agmatine from L-arginine: step 1/1. Catalyzes the biosynthesis of agmatine from arginine. The polypeptide is Biosynthetic arginine decarboxylase (Shewanella sediminis (strain HAW-EB3)).